A 139-amino-acid polypeptide reads, in one-letter code: NADPH-dependent 7-cyano-7-deazaguanine reductase (139 aa).

Cys34 serves as the catalytic Thioimide intermediate. The active-site Proton donor is the Asp41. Substrate is bound by residues 56-58 (IEL) and 75-76 (HE).

The protein belongs to the GTP cyclohydrolase I family. QueF type 1 subfamily.

The protein localises to the cytoplasm. It carries out the reaction 7-aminomethyl-7-carbaguanine + 2 NADP(+) = 7-cyano-7-deazaguanine + 2 NADPH + 3 H(+). It functions in the pathway tRNA modification; tRNA-queuosine biosynthesis. Catalyzes the NADPH-dependent reduction of 7-cyano-7-deazaguanine (preQ0) to 7-aminomethyl-7-deazaguanine (preQ1). The chain is NADPH-dependent 7-cyano-7-deazaguanine reductase from Nitrosomonas europaea (strain ATCC 19718 / CIP 103999 / KCTC 2705 / NBRC 14298).